The primary structure comprises 83 residues: Ferredoxin (83 aa).

4Fe-4S ferredoxin-type domains lie at 2-29 (ALMITDECINCDVCEPECPNGAISQGDE) and 31-64 (YVIEPSLCTECVGHYETSQCVEVCPVDCIIKDPS). [4Fe-4S] cluster-binding residues include Cys-9, Cys-12, Cys-15, Cys-19, Cys-38, Cys-41, Cys-50, and Cys-54.

It depends on [4Fe-4S] cluster as a cofactor.

Ferredoxins are iron-sulfur proteins that transfer electrons in a wide variety of metabolic reactions. The protein is Ferredoxin (fdx) of Allochromatium vinosum (strain ATCC 17899 / DSM 180 / NBRC 103801 / NCIMB 10441 / D) (Chromatium vinosum).